A 290-amino-acid chain; its full sequence is Nucleotide-binding protein Bpet0443 (290 aa).

Residue 9 to 16 (GISGSGKS) coordinates ATP. 58–61 (DVRS) is a binding site for GTP.

Belongs to the RapZ-like family.

In terms of biological role, displays ATPase and GTPase activities. This is Nucleotide-binding protein Bpet0443 from Bordetella petrii (strain ATCC BAA-461 / DSM 12804 / CCUG 43448).